The sequence spans 346 residues: Annexin A1 (346 aa).

Alanine 2 bears the N-acetylalanine mark. Residue serine 5 is modified to Phosphoserine; by TRPM7. Glutamine 19 is covalently cross-linked (Isoglutamyl lysine isopeptide (Gln-Lys) (interchain with K-?)). At tyrosine 21 the chain carries Phosphotyrosine; by EGFR. Positions 25–47 (VKGSKGGPGSAVSPYPTFNPSSD) are disordered. 2 positions are modified to phosphoserine: serine 34 and serine 37. Threonine 41 is subject to Phosphothreonine. 4 Annexin repeats span residues 42–113 (FNPS…ALLK), 114–185 (TPAQ…SLAK), 197–269 (DLAD…VVVK), and 273–344 (SKPM…ALCG). Lysine 58 bears the N6-acetyllysine mark. Residues glycine 59, valine 60, glutamate 62, lysine 97, leucine 100, glutamate 105, methionine 127, glycine 129, glycine 131, threonine 132, and glutamate 134 each contribute to the Ca(2+) site. The residue at position 136 (threonine 136) is a Phosphothreonine. Ca(2+) contacts are provided by aspartate 171, glycine 210, and arginine 213. A Glycyl lysine isopeptide (Lys-Gly) (interchain with G-Cter in SUMO1); alternate cross-link involves residue lysine 214. A Glycyl lysine isopeptide (Lys-Gly) (interchain with G-Cter in SUMO2); alternate cross-link involves residue lysine 214. Residue glycine 215 participates in Ca(2+) binding. Lysine 239 is subject to N6-acetyllysine. Ca(2+) is bound by residues aspartate 253, glutamate 255, and leucine 256. Residue lysine 257 forms a Glycyl lysine isopeptide (Lys-Gly) (interchain with G-Cter in SUMO1) linkage. Glutamate 261, methionine 286, glycine 288, and glycine 290 together coordinate Ca(2+). N6-acetyllysine is present on lysine 312. A disulfide bond links cysteine 324 and cysteine 343. Ca(2+)-binding residues include leucine 328, glutamate 330, and threonine 331. Lysine 332 is covalently cross-linked (Glycyl lysine isopeptide (Lys-Gly) (interchain with G-Cter in SUMO1)). Glutamate 336 is a binding site for Ca(2+).

This sequence belongs to the annexin family. As to quaternary structure, homodimer; non-covalently linked. Homodimer; linked by transglutamylation. Homodimers linked by transglutamylation are observed in placenta, but not in other tissues. Interacts with S100A11. Heterotetramer, formed by two molecules each of S100A11 and ANXA1. Interacts with DYSF. Interacts with EGFR. In terms of processing, phosphorylated by EGFR. Phosphorylated by protein kinase C and TRPM7. Phosphorylated in response to EGF treatment. Sumoylated. Post-translationally, proteolytically cleaved by cathepsin CTSG to release the active N-terminal peptide Ac2-26. In terms of tissue distribution, detected in lung and spleen (at protein level).

The protein localises to the nucleus. Its subcellular location is the cytoplasm. It localises to the cell projection. It is found in the cilium. The protein resides in the basolateral cell membrane. The protein localises to the lateral cell membrane. Its subcellular location is the early endosome. It localises to the cell membrane. It is found in the cytoplasmic vesicle membrane. The protein resides in the apical cell membrane. The protein localises to the membrane. Its subcellular location is the endosome. It localises to the secreted. It is found in the extracellular space. The protein resides in the extracellular exosome. The protein localises to the cytoplasmic vesicle. Its subcellular location is the secretory vesicle lumen. It localises to the phagocytic cup. Functionally, plays important roles in the innate immune response as effector of glucocorticoid-mediated responses and regulator of the inflammatory process. Has anti-inflammatory activity. Plays a role in glucocorticoid-mediated down-regulation of the early phase of the inflammatory response. Contributes to the adaptive immune response by enhancing signaling cascades that are triggered by T-cell activation, regulates differentiation and proliferation of activated T-cells. Promotes the differentiation of T-cells into Th1 cells and negatively regulates differentiation into Th2 cells. Has no effect on unstimulated T-cells. Negatively regulates hormone exocytosis via activation of the formyl peptide receptors and reorganization of the actin cytoskeleton. Has high affinity for Ca(2+) and can bind up to eight Ca(2+) ions. Displays Ca(2+)-dependent binding to phospholipid membranes. Plays a role in the formation of phagocytic cups and phagosomes. Plays a role in phagocytosis by mediating the Ca(2+)-dependent interaction between phagosomes and the actin cytoskeleton. Functions at least in part by activating the formyl peptide receptors and downstream signaling cascades. Promotes chemotaxis of granulocytes and monocytes via activation of the formyl peptide receptors. Promotes rearrangement of the actin cytoskeleton, cell polarization and cell migration. Promotes resolution of inflammation and wound healing. Acts via neutrophil N-formyl peptide receptors to enhance the release of CXCL2. This is Annexin A1 (ANXA1) from Sus scrofa (Pig).